A 326-amino-acid chain; its full sequence is tRNA-modifying protein YgfZ (326 aa).

Folate contacts are provided by W27 and W189.

The protein belongs to the tRNA-modifying YgfZ family.

It localises to the cytoplasm. In terms of biological role, folate-binding protein involved in regulating the level of ATP-DnaA and in the modification of some tRNAs. It is probably a key factor in regulatory networks that act via tRNA modification, such as initiation of chromosomal replication. The polypeptide is tRNA-modifying protein YgfZ (Enterobacter sp. (strain 638)).